The sequence spans 1165 residues: Chromosome partition protein Smc (1165 aa).

32-39 (PNGSGKSN) serves as a coordination point for ATP. A coiled-coil region spans residues 161 to 503 (AGVAEFDRKI…ETQRQVWREA (343 aa)). One can recognise an SMC hinge domain in the interval 518–630 (QGVHGLISQL…VFRSLELARR (113 aa)). Coiled coils occupy residues 672–901 (ELAE…LQQR) and 946–1010 (DLSL…DCDT).

It belongs to the SMC family. In terms of assembly, homodimer.

It localises to the cytoplasm. Functionally, required for chromosome condensation and partitioning. This chain is Chromosome partition protein Smc, found in Gloeobacter violaceus (strain ATCC 29082 / PCC 7421).